Consider the following 322-residue polypeptide: Phosphatidylserine decarboxylase proenzyme (322 aa).

Residues D90, H147, and S254 each act as charge relay system; for autoendoproteolytic cleavage activity in the active site. The active-site Schiff-base intermediate with substrate; via pyruvic acid; for decarboxylase activity is S254. Position 254 is a pyruvic acid (Ser); by autocatalysis (S254). The segment at E294–T322 is disordered. Basic and acidic residues predominate over residues E303–T322.

It belongs to the phosphatidylserine decarboxylase family. PSD-B subfamily. Prokaryotic type I sub-subfamily. As to quaternary structure, heterodimer of a large membrane-associated beta subunit and a small pyruvoyl-containing alpha subunit. It depends on pyruvate as a cofactor. In terms of processing, is synthesized initially as an inactive proenzyme. Formation of the active enzyme involves a self-maturation process in which the active site pyruvoyl group is generated from an internal serine residue via an autocatalytic post-translational modification. Two non-identical subunits are generated from the proenzyme in this reaction, and the pyruvate is formed at the N-terminus of the alpha chain, which is derived from the carboxyl end of the proenzyme. The autoendoproteolytic cleavage occurs by a canonical serine protease mechanism, in which the side chain hydroxyl group of the serine supplies its oxygen atom to form the C-terminus of the beta chain, while the remainder of the serine residue undergoes an oxidative deamination to produce ammonia and the pyruvoyl prosthetic group on the alpha chain. During this reaction, the Ser that is part of the protease active site of the proenzyme becomes the pyruvoyl prosthetic group, which constitutes an essential element of the active site of the mature decarboxylase.

It is found in the cell membrane. The enzyme catalyses a 1,2-diacyl-sn-glycero-3-phospho-L-serine + H(+) = a 1,2-diacyl-sn-glycero-3-phosphoethanolamine + CO2. Its pathway is phospholipid metabolism; phosphatidylethanolamine biosynthesis; phosphatidylethanolamine from CDP-diacylglycerol: step 2/2. In terms of biological role, catalyzes the formation of phosphatidylethanolamine (PtdEtn) from phosphatidylserine (PtdSer). This chain is Phosphatidylserine decarboxylase proenzyme, found in Salmonella arizonae (strain ATCC BAA-731 / CDC346-86 / RSK2980).